Here is a 240-residue protein sequence, read N- to C-terminus: UDP-2,3-diacylglucosamine hydrolase (240 aa).

Mn(2+)-binding residues include Asp-8, His-10, Asp-41, Asn-79, and His-114. Position 79–80 (79–80 (NR)) interacts with substrate. Positions 122, 160, 164, 167, and 195 each coordinate substrate. Residues His-195 and His-197 each coordinate Mn(2+).

Belongs to the LpxH family. It depends on Mn(2+) as a cofactor.

Its subcellular location is the cell inner membrane. It carries out the reaction UDP-2-N,3-O-bis[(3R)-3-hydroxytetradecanoyl]-alpha-D-glucosamine + H2O = 2-N,3-O-bis[(3R)-3-hydroxytetradecanoyl]-alpha-D-glucosaminyl 1-phosphate + UMP + 2 H(+). The protein operates within glycolipid biosynthesis; lipid IV(A) biosynthesis; lipid IV(A) from (3R)-3-hydroxytetradecanoyl-[acyl-carrier-protein] and UDP-N-acetyl-alpha-D-glucosamine: step 4/6. In terms of biological role, hydrolyzes the pyrophosphate bond of UDP-2,3-diacylglucosamine to yield 2,3-diacylglucosamine 1-phosphate (lipid X) and UMP by catalyzing the attack of water at the alpha-P atom. Involved in the biosynthesis of lipid A, a phosphorylated glycolipid that anchors the lipopolysaccharide to the outer membrane of the cell. This chain is UDP-2,3-diacylglucosamine hydrolase, found in Salmonella agona (strain SL483).